We begin with the raw amino-acid sequence, 489 residues long: Glucose-6-phosphate 1-dehydrogenase (489 aa).

NADP(+) is bound by residues Arg-50 and Lys-151. 4 residues coordinate substrate: His-181, Lys-185, Glu-219, and Asp-238. His-243 functions as the Proton acceptor in the catalytic mechanism. Residues Lys-341 and Lys-346 each contribute to the substrate site.

It belongs to the glucose-6-phosphate dehydrogenase family. As to quaternary structure, homodimer.

The catalysed reaction is D-glucose 6-phosphate + NADP(+) = 6-phospho-D-glucono-1,5-lactone + NADPH + H(+). The protein operates within carbohydrate degradation; pentose phosphate pathway; D-ribulose 5-phosphate from D-glucose 6-phosphate (oxidative stage): step 1/3. In terms of biological role, catalyzes the oxidation of glucose 6-phosphate to 6-phosphogluconolactone. In Gluconobacter oxydans (strain 621H) (Gluconobacter suboxydans), this protein is Glucose-6-phosphate 1-dehydrogenase.